The following is a 185-amino-acid chain: Large ribosomal subunit protein uL22 (185 aa).

The disordered stretch occupies residues 158–185; that stretch reads AKPREDEPHKKKISKKKLARAKEKMLRE. Basic residues predominate over residues 167-176; that stretch reads KKKISKKKLA.

The protein belongs to the universal ribosomal protein uL22 family.

This Diaphorina citri (Asian citrus psyllid) protein is Large ribosomal subunit protein uL22 (RpL17).